The sequence spans 366 residues: Chorismate synthase (366 aa).

Arg-48 and Arg-54 together coordinate NADP(+). FMN is bound by residues 125–127 (RSS), 238–239 (NA), Gly-278, 293–297 (KPTSS), and Arg-319.

Belongs to the chorismate synthase family. In terms of assembly, homotetramer. FMNH2 is required as a cofactor.

It catalyses the reaction 5-O-(1-carboxyvinyl)-3-phosphoshikimate = chorismate + phosphate. It functions in the pathway metabolic intermediate biosynthesis; chorismate biosynthesis; chorismate from D-erythrose 4-phosphate and phosphoenolpyruvate: step 7/7. In terms of biological role, catalyzes the anti-1,4-elimination of the C-3 phosphate and the C-6 proR hydrogen from 5-enolpyruvylshikimate-3-phosphate (EPSP) to yield chorismate, which is the branch point compound that serves as the starting substrate for the three terminal pathways of aromatic amino acid biosynthesis. This reaction introduces a second double bond into the aromatic ring system. The sequence is that of Chorismate synthase from Paraburkholderia xenovorans (strain LB400).